A 273-amino-acid polypeptide reads, in one-letter code: Cell division cycle-associated protein 3 (273 aa).

Disordered stretches follow at residues M1–E231 and G251–S273. 2 positions are modified to phosphoserine: S29 and S31. The span at A32 to P45 shows a compositional bias: polar residues. The residue at position 37 (T37) is a Phosphothreonine. Phosphoserine is present on residues S44 and S67. Phosphothreonine is present on T75. Residues K90–S124 form an F-box-like region. Position 93 is a phosphoserine (S93). Residues E94–V105 show a composition bias toward acidic residues. 2 stretches are compositionally biased toward polar residues: residues P144–Q154 and S164–D175. The residue at position 204 (S204) is a Phosphoserine. A Phosphothreonine modification is found at T207. Polar residues predominate over residues Q210–L220. A Phosphoserine modification is found at S214. T217 is subject to Phosphothreonine. The short motif at K263 to N265 is the KEN box element.

As to quaternary structure, interacts with SKP1. Part of a SCF (SKP1-cullin-F-box) protein ligase complex. Ubiquitinated and degraded by the APC/C-Cdh1 complex.

It localises to the cytoplasm. Its subcellular location is the cytosol. It participates in protein modification; protein ubiquitination. Its function is as follows. F-box-like protein which is required for entry into mitosis. Acts by participating in E3 ligase complexes that mediate the ubiquitination and degradation of WEE1 kinase at G2/M phase. The sequence is that of Cell division cycle-associated protein 3 (Cdca3) from Rattus norvegicus (Rat).